We begin with the raw amino-acid sequence, 219 residues long: MAMKLYGDEMSACVARVLLCLHEKNTEFELVPVNLFACHHKLPSFLSMNPFGKVPALQDDDLTLFESRAITAYIAEKHRDKGTDLTRHEDPKEAAIVKLWSEVEAHHFNPAISAVIHQLIVVPLQGESPNAAIVEENLENLGKILDVYEERLGKTKYLAGDTYTLADLHHVPYTYYFMKTIHAGLINDRPNVKAWWEDLCSRPAFLKVSPGLTVAPTTN.

In terms of domain architecture, GST N-terminal spans 2-82; that stretch reads AMKLYGDEMS…YIAEKHRDKG (81 aa). Residues 11–12, 40–41, 53–54, and 66–67 contribute to the glutathione site; these read SA, HK, KV, and ES. Residues 90–217 form the GST C-terminal domain; the sequence is DPKEAAIVKL…VSPGLTVAPT (128 aa).

It belongs to the GST superfamily. Phi family.

The protein resides in the cytoplasm. It is found in the cytosol. The enzyme catalyses RX + glutathione = an S-substituted glutathione + a halide anion + H(+). Its function is as follows. May be involved in the conjugation of reduced glutathione to a wide number of exogenous and endogenous hydrophobic electrophiles and have a detoxification role against certain herbicides. This Arabidopsis thaliana (Mouse-ear cress) protein is Glutathione S-transferase F13 (GSTF13).